The chain runs to 608 residues: Zinc metalloproteinase-disintegrin-like agkihagin (608 aa).

The N-terminal stretch at 1–20 is a signal peptide; that stretch reads MIQVLLVTICLAAFPYQGSS. Positions 21-189 are excised as a propeptide; the sequence is IILESGNVND…KKASQSNLTP (169 aa). The Peptidase M12B domain maps to 199–395; that stretch reads KFVKLFLVAD…NMPQCILKKP (197 aa). Cystine bridges form between Cys-310/Cys-390, Cys-350/Cys-374, and Cys-352/Cys-357. His-335 lines the Zn(2+) pocket. The active site involves Glu-336. Residues His-339 and His-345 each contribute to the Zn(2+) site. The region spanning 403-488 is the Disintegrin domain; sequence PPVCGNYFVE…ADCTDRFQKN (86 aa). The Ca(2+) site is built by Val-405, Asn-408, Phe-410, Glu-412, Glu-415, and Asp-418. 14 disulfides stabilise this stretch: Cys-406-Cys-435, Cys-417-Cys-430, Cys-419-Cys-425, Cys-429-Cys-452, Cys-443-Cys-449, Cys-448-Cys-474, Cys-461-Cys-481, Cys-468-Cys-499, Cys-492-Cys-504, Cys-511-Cys-561, Cys-526-Cys-570, Cys-539-Cys-549, Cys-556-Cys-596, and Cys-590-Cys-601. A D/ECD-tripeptide motif is present at residues 467-469; the sequence is ECD. Ca(2+)-binding residues include Asp-469, Met-470, Asp-472, Asp-483, and Arg-484. Residue Asn-501 is glycosylated (N-linked (GlcNAc...) asparagine).

Belongs to the venom metalloproteinase (M12B) family. P-III subfamily. P-IIIc sub-subfamily. Homodimer; disulfide-linked. The cofactor is Zn(2+). In terms of tissue distribution, expressed by the venom gland.

It is found in the secreted. Its activity is regulated as follows. Inhibited by EDTA and EGTA. Not inhibited by PMSF, antipain, pepstatin, and iodoacetamide. Strongly inhibits the collagen-induced human platelet aggregation. Hydrolyzes the Aalpha-chain of fibrinogen (FGA), without cleavage of Bbeta- and gamma-chains. Induces apoptosis and strongly inhibits proliferation of endothelial cells as well as adhesion of the cells to extracellular matrix proteins. This chain is Zinc metalloproteinase-disintegrin-like agkihagin, found in Deinagkistrodon acutus (Hundred-pace snake).